Here is a 752-residue protein sequence, read N- to C-terminus: Double zinc ribbon and ankyrin repeat-containing protein 1 (752 aa).

2 DZANK-type zinc fingers span residues 210-270 (CPKC…VVCE) and 338-386 (CSKC…GGCG). Residues 448-469 (KKRSQQREAELSRQEQMRDRKP) show a composition bias toward basic and acidic residues. Disordered regions lie at residues 448 to 471 (KKRS…KPLL) and 536 to 614 (PPEE…VGPE). A compositionally biased stretch (low complexity) spans 536–554 (PPEESRSSSAGQRSRSVTS). The span at 555–580 (ESQNLSSVTEGRNSASPENNINTTGS) shows a compositional bias: polar residues. Residues 600–614 (PESKDSLLLKEVGPE) are compositionally biased toward basic and acidic residues. 3 ANK repeats span residues 638–667 (DGRP…DVNQ), 672–703 (LKNT…SIRK), and 707–737 (RGQT…GLLL).

The protein localises to the cytoplasm. It localises to the cytoskeleton. The protein resides in the microtubule organizing center. Its subcellular location is the centrosome. It is found in the cilium basal body. In terms of biological role, required for the intracellular transport of organelles and vesicles, and is essential for the photoreceptor's outer segments formation, maintenance and function. This chain is Double zinc ribbon and ankyrin repeat-containing protein 1 (dzank1), found in Danio rerio (Zebrafish).